The primary structure comprises 102 residues: NADH-quinone oxidoreductase subunit K (102 aa).

The next 3 membrane-spanning stretches (helical) occupy residues 5 to 25 (LAHY…GIFV), 30 to 50 (IIVI…NLVA), and 62 to 82 (IFAM…LAIL).

It belongs to the complex I subunit 4L family. As to quaternary structure, NDH-1 is composed of 14 different subunits. Subunits NuoA, H, J, K, L, M, N constitute the membrane sector of the complex.

The protein localises to the cell inner membrane. It catalyses the reaction a quinone + NADH + 5 H(+)(in) = a quinol + NAD(+) + 4 H(+)(out). Its function is as follows. NDH-1 shuttles electrons from NADH, via FMN and iron-sulfur (Fe-S) centers, to quinones in the respiratory chain. The immediate electron acceptor for the enzyme in this species is believed to be ubiquinone. Couples the redox reaction to proton translocation (for every two electrons transferred, four hydrogen ions are translocated across the cytoplasmic membrane), and thus conserves the redox energy in a proton gradient. This is NADH-quinone oxidoreductase subunit K from Phenylobacterium zucineum (strain HLK1).